A 155-amino-acid polypeptide reads, in one-letter code: 6,7-dimethyl-8-ribityllumazine synthase (155 aa).

Residues Tyr-23, 57–59 (AWE), and 81–83 (CVI) contribute to the 5-amino-6-(D-ribitylamino)uracil site. 86-87 (ET) provides a ligand contact to (2S)-2-hydroxy-3-oxobutyl phosphate. The Proton donor role is filled by His-89. 5-amino-6-(D-ribitylamino)uracil is bound at residue Phe-114. Arg-128 lines the (2S)-2-hydroxy-3-oxobutyl phosphate pocket.

Belongs to the DMRL synthase family.

It carries out the reaction (2S)-2-hydroxy-3-oxobutyl phosphate + 5-amino-6-(D-ribitylamino)uracil = 6,7-dimethyl-8-(1-D-ribityl)lumazine + phosphate + 2 H2O + H(+). The protein operates within cofactor biosynthesis; riboflavin biosynthesis; riboflavin from 2-hydroxy-3-oxobutyl phosphate and 5-amino-6-(D-ribitylamino)uracil: step 1/2. Catalyzes the formation of 6,7-dimethyl-8-ribityllumazine by condensation of 5-amino-6-(D-ribitylamino)uracil with 3,4-dihydroxy-2-butanone 4-phosphate. This is the penultimate step in the biosynthesis of riboflavin. The protein is 6,7-dimethyl-8-ribityllumazine synthase of Rhodopirellula baltica (strain DSM 10527 / NCIMB 13988 / SH1).